We begin with the raw amino-acid sequence, 169 residues long: Peptide deformylase 1 (169 aa).

Fe cation-binding residues include Cys-93 and His-135. Glu-136 is an active-site residue. His-139 is a Fe cation binding site.

Belongs to the polypeptide deformylase family. It depends on Fe(2+) as a cofactor.

The catalysed reaction is N-terminal N-formyl-L-methionyl-[peptide] + H2O = N-terminal L-methionyl-[peptide] + formate. Removes the formyl group from the N-terminal Met of newly synthesized proteins. Requires at least a dipeptide for an efficient rate of reaction. N-terminal L-methionine is a prerequisite for activity but the enzyme has broad specificity at other positions. In Corynebacterium glutamicum (strain ATCC 13032 / DSM 20300 / JCM 1318 / BCRC 11384 / CCUG 27702 / LMG 3730 / NBRC 12168 / NCIMB 10025 / NRRL B-2784 / 534), this protein is Peptide deformylase 1.